The following is an 820-amino-acid chain: Cation/H(+) antiporter 17 (820 aa).

The next 12 helical transmembrane spans lie at 30-50, 58-75, 90-110, 124-144, 159-179, 192-212, 222-242, 276-296, 313-333, 342-362, 374-394, and 404-424; these read LPLLILQICIVLLLTRLLAFL, RVIAEIVGGILLGPSALG, LTVLDTLANLGLIFFLFLVGL, ALSIALAGITLPFVLGIGTSF, FLVFMGVALSITAFPVLARIL, IALSAAAVNDVAAWILLALAV, LTSLWVFLSGCGFVLFCIFVV, FVTDFIGIHALFGAFVIGVIF, LVSGLFLPLYFVSSGLKTNVA, GLLVLVIFNACFGKIIGTVLV, LALGFLMNTKGLVELIVLNIG, and IFAIMVLMAIFTTFMTTPLVL. A phosphoserine mark is found at Ser-817 and Ser-819.

It belongs to the monovalent cation:proton antiporter 2 (CPA2) transporter (TC 2.A.37) family. CHX (TC 2.A.37.4) subfamily. As to expression, predominantly expressed in epidermal and cortical cells of mature roots but also barely detected in leaves.

The protein localises to the membrane. Operates as a K(+)/H(+) antiporter that controls K(+) acquisition and homeostasis. The chain is Cation/H(+) antiporter 17 (CHX17) from Arabidopsis thaliana (Mouse-ear cress).